The following is a 410-amino-acid chain: Zinc finger TRAF-type-containing protein 1 (410 aa).

Gly residues predominate over residues 1–13 (MSGAEEAGGGGPA). Residues 1-22 (MSGAEEAGGGGPAAGPAGSVPA) are disordered. The RING-type; degenerate zinc finger occupies 117-162 (CTVCLDLPKASVYQCTNGHLMCAGCFIHLLADARLKEEQATCPNCR). The segment at 158–231 (CPNCRCEISK…PWHGPFHELT (74 aa)) adopts a TRAF-type zinc-finger fold.

Belongs to the ZFTRAF1 family. In terms of assembly, interacts with LGALS3.

It is found in the cytoplasm. It localises to the perinuclear region. The protein is Zinc finger TRAF-type-containing protein 1 of Bos taurus (Bovine).